A 335-amino-acid polypeptide reads, in one-letter code: Deoxyhypusine hydroxylase (335 aa).

HEAT-like PBS-type repeat units lie at residues L71 to D97, C104 to N130, Q200 to D233, F238 to D264, and V271 to D298. H73, E74, H106, and E107 together coordinate Fe cation. Fe cation contacts are provided by H240, E241, H273, and E274.

This sequence belongs to the deoxyhypusine hydroxylase family. Requires Fe(2+) as cofactor.

Its subcellular location is the cytoplasm. It localises to the nucleus. It catalyses the reaction [eIF5A protein]-deoxyhypusine + AH2 + O2 = [eIF5A protein]-hypusine + A + H2O. The protein operates within protein modification; eIF5A hypusination. Functionally, catalyzes the hydroxylation of the N(6)-(4-aminobutyl)-L-lysine intermediate to form hypusine, an essential post-translational modification only found in mature eIF-5A factor. The protein is Deoxyhypusine hydroxylase (lia1) of Aspergillus clavatus (strain ATCC 1007 / CBS 513.65 / DSM 816 / NCTC 3887 / NRRL 1 / QM 1276 / 107).